The sequence spans 433 residues: MNVTMHSKKLLKPSIPTPNHLQKLNLSLLDQIQIPFYVGLIFHYETLSDNSDITLSKLESSLSETLTLYYHVAGRYNGTDCVIECNDQGIGYVETAFDVELHQFLLGEESNNLDLLVGLSGFLSETETPPLAAIQLNMFKCGGLVIGAQFNHIIGDMFTMSTFMNSWAKACRVGIKEVAHPTFGLAPLMPSAKVLNIPPPPSFEGVKFVSKRFVFHENALTRLRKEATEEDGDGDDDQKKKRPSRVDLVTAFLSKSLIEMDCAPKELTKSRPSLMVHMMNLRKRTKLALENDVSGNFFIVVNAESKITVAPKITDLTESLGSACGEIISEVAKVDDAEVVSSMVLNSVREFYYEWGKGEKNVFVYSSWCRFPLYEVDFGWGIPSLVDTTAFPFGLIVLMDEAPAGDGIAVRACLSEHDMIQFQQHHQLLSYVS.

Catalysis depends on proton acceptor residues histidine 152 and aspartate 377.

This sequence belongs to the plant acyltransferase family.

The catalysed reaction is benzyl alcohol + acetyl-CoA = benzyl acetate + CoA. The enzyme catalyses (E)-cinnamyl alcohol + acetyl-CoA = (E)-cinnamyl acetate + CoA. Its function is as follows. Involved in the biosynthesis of benzyl acetate, a major constituent of the floral scent. Can use benzylalcohol, cinnamylalcohol, 3-cis-hexene-1-ol or heptanol as substrates. Has some activity with 2-phenylethanol and 2-naphtalene-ethanol. The sequence is that of Acetyl-CoA-benzylalcohol acetyltransferase (BEAT) from Clarkia breweri (Fairy fans).